The primary structure comprises 356 residues: Phosphoribosylformylglycinamidine cyclo-ligase (356 aa).

This sequence belongs to the AIR synthase family.

Its subcellular location is the cytoplasm. It catalyses the reaction 2-formamido-N(1)-(5-O-phospho-beta-D-ribosyl)acetamidine + ATP = 5-amino-1-(5-phospho-beta-D-ribosyl)imidazole + ADP + phosphate + H(+). The protein operates within purine metabolism; IMP biosynthesis via de novo pathway; 5-amino-1-(5-phospho-D-ribosyl)imidazole from N(2)-formyl-N(1)-(5-phospho-D-ribosyl)glycinamide: step 2/2. The polypeptide is Phosphoribosylformylglycinamidine cyclo-ligase (Sinorhizobium fredii (strain NBRC 101917 / NGR234)).